Here is a 654-residue protein sequence, read N- to C-terminus: MTQTHSTELFKPNRAFAKTARIKNLCEYEDLRLDAEEDFEGFWGKLAKEKIDWMEPFSKVLDESEAPFYKWFVGGKLNVCAQCLDRHLDTRKNKAAIIFEGELGDSRIITYRELFYEVKRTANLLKNKFNVKKGDRVVIYMPMIPEAAFMMLACARIGAIHSVVFGGFSAEALRDRIIDAEAKLVITADGAYRRGKPYMLKPVVDDALAEGACPSIEKVLIVIRNKEEINYVPGRDYIYNEMIGLESAHCPPEPMDAEDPLFLLYTSGSTGKPKGVQHNQAGYILWAQTTMEWVFDVKENDTYWCTADVGWITGHTYIVYGPLAMGATTVMYEGVPIYPDTGRWWKMIEHYRVNQFYTAPTAIRLLHKEGKEEPKKYNLSNLKVLGTVGEPINPDAWNWYYNEIGGGQCPIVDTWWQTETGGHMISPLPGATPIKPGCATLPLPGIFAEVIDEEGNPKPAGEQGYLCITKPWPSMIRNIWGDPKRYESSYFSTCKKNGKPVYFAGDGAIRDERGYITITGRMDDVINVSGHRLGTAEIESAIAKHPGVAETAVVSRLDEIKGESVYAFIVLKPGYEDNVAEELQLLKEINAVITREIGPLAKADTMLFVPGLPKTRSGKIMRRILRSIARGEEITQDTSTLEDPAIVQKIQQLA.

Residues arginine 193 to lysine 196 and threonine 313 contribute to the CoA site. Residues glycine 389–proline 391, aspartate 413–threonine 418, aspartate 506, and arginine 521 contribute to the ATP site. Serine 529 provides a ligand contact to CoA. Arginine 532 lines the ATP pocket. Residues histidine 545 and valine 548 each coordinate Mg(2+). The residue at position 619 (lysine 619) is an N6-acetyllysine.

Belongs to the ATP-dependent AMP-binding enzyme family. Requires Mg(2+) as cofactor. Post-translationally, acetylated. Deacetylation by the SIR2-homolog deacetylase activates the enzyme.

It carries out the reaction acetate + ATP + CoA = acetyl-CoA + AMP + diphosphate. Its function is as follows. Catalyzes the conversion of acetate into acetyl-CoA (AcCoA), an essential intermediate at the junction of anabolic and catabolic pathways. AcsA undergoes a two-step reaction. In the first half reaction, AcsA combines acetate with ATP to form acetyl-adenylate (AcAMP) intermediate. In the second half reaction, it can then transfer the acetyl group from AcAMP to the sulfhydryl group of CoA, forming the product AcCoA. This is Acetyl-coenzyme A synthetase from Wolinella succinogenes (strain ATCC 29543 / DSM 1740 / CCUG 13145 / JCM 31913 / LMG 7466 / NCTC 11488 / FDC 602W) (Vibrio succinogenes).